The following is a 131-amino-acid chain: D-ribose pyranase (131 aa).

Catalysis depends on H20, which acts as the Proton donor. Residues D28, H98, and 120–122 (YSN) contribute to the substrate site.

The protein belongs to the RbsD / FucU family. RbsD subfamily. Homodecamer.

The protein resides in the cytoplasm. The enzyme catalyses beta-D-ribopyranose = beta-D-ribofuranose. It functions in the pathway carbohydrate metabolism; D-ribose degradation; D-ribose 5-phosphate from beta-D-ribopyranose: step 1/2. Its function is as follows. Catalyzes the interconversion of beta-pyran and beta-furan forms of D-ribose. The polypeptide is D-ribose pyranase (Limosilactobacillus reuteri (strain DSM 20016) (Lactobacillus reuteri)).